The chain runs to 745 residues: Polyribonucleotide nucleotidyltransferase (745 aa).

The Mg(2+) site is built by D487 and D493. A KH domain is found at 554 to 613; it reads PRIETMQIPTDKIRDVIGTGGKIIREIVEKTGAKINIEDTGIVKIASSDGKAIKAAYNWI. An S1 motif domain is found at 623–691; the sequence is GTIYDGTIVK…ERGKIRLSMK (69 aa). Residues 695–745 form a disordered region; it reads QETGEDLTEKLKAERAERGEPEREERSDRGDRGDRGPRRDRGERRRESSGE. Over residues 701–745 the composition is skewed to basic and acidic residues; that stretch reads LTEKLKAERAERGEPEREERSDRGDRGDRGPRRDRGERRRESSGE.

It belongs to the polyribonucleotide nucleotidyltransferase family. The cofactor is Mg(2+).

The protein resides in the cytoplasm. The catalysed reaction is RNA(n+1) + phosphate = RNA(n) + a ribonucleoside 5'-diphosphate. Functionally, involved in mRNA degradation. Catalyzes the phosphorolysis of single-stranded polyribonucleotides processively in the 3'- to 5'-direction. In Methylorubrum extorquens (strain CM4 / NCIMB 13688) (Methylobacterium extorquens), this protein is Polyribonucleotide nucleotidyltransferase.